The sequence spans 198 residues: Thymidine kinase (198 aa).

ATP is bound by residues 9–16 (STMNAGKS) and 87–90 (DEAQ). The active-site Proton acceptor is Glu-88. 4 residues coordinate Zn(2+): Cys-145, Cys-147, Cys-182, and His-185.

It belongs to the thymidine kinase family. As to quaternary structure, homotetramer.

It is found in the cytoplasm. The catalysed reaction is thymidine + ATP = dTMP + ADP + H(+). The polypeptide is Thymidine kinase (Ruegeria pomeroyi (strain ATCC 700808 / DSM 15171 / DSS-3) (Silicibacter pomeroyi)).